A 210-amino-acid polypeptide reads, in one-letter code: Orotate phosphoribosyltransferase (210 aa).

Residues arginine 96, lysine 100, histidine 102, and 122-130 (EDLISTGGS) each bind 5-phospho-alpha-D-ribose 1-diphosphate. Serine 126 contacts orotate.

Belongs to the purine/pyrimidine phosphoribosyltransferase family. PyrE subfamily. Homodimer. Requires Mg(2+) as cofactor.

It carries out the reaction orotidine 5'-phosphate + diphosphate = orotate + 5-phospho-alpha-D-ribose 1-diphosphate. Its pathway is pyrimidine metabolism; UMP biosynthesis via de novo pathway; UMP from orotate: step 1/2. Functionally, catalyzes the transfer of a ribosyl phosphate group from 5-phosphoribose 1-diphosphate to orotate, leading to the formation of orotidine monophosphate (OMP). This chain is Orotate phosphoribosyltransferase, found in Streptococcus pneumoniae serotype 4 (strain ATCC BAA-334 / TIGR4).